Reading from the N-terminus, the 208-residue chain is dITP/XTP pyrophosphatase (208 aa).

Substrate is bound at residue 16–21 (TGNAGK). Residues Glu46 and Asp75 each contribute to the Mg(2+) site. Asp75 (proton acceptor) is an active-site residue. Substrate-binding positions include Ser76, 155 to 158 (FGYD), Lys178, and 183 to 184 (HR).

Belongs to the HAM1 NTPase family. Homodimer. The cofactor is Mg(2+).

The catalysed reaction is XTP + H2O = XMP + diphosphate + H(+). It catalyses the reaction dITP + H2O = dIMP + diphosphate + H(+). It carries out the reaction ITP + H2O = IMP + diphosphate + H(+). Functionally, pyrophosphatase that catalyzes the hydrolysis of nucleoside triphosphates to their monophosphate derivatives, with a high preference for the non-canonical purine nucleotides XTP (xanthosine triphosphate), dITP (deoxyinosine triphosphate) and ITP. Seems to function as a house-cleaning enzyme that removes non-canonical purine nucleotides from the nucleotide pool, thus preventing their incorporation into DNA/RNA and avoiding chromosomal lesions. The chain is dITP/XTP pyrophosphatase from Deinococcus deserti (strain DSM 17065 / CIP 109153 / LMG 22923 / VCD115).